A 126-amino-acid polypeptide reads, in one-letter code: MQLSLLKAKIHRATVSHSELNYEGSIAIDGLLLEAAGLYEFEKVHIWNVTNGARFTTYAIRAEHGSGIISVNGGAARYVQVGDLVIVAAFAQMSEDEAAVFSPNLVYVDAANAMTHTNHSIPTQVA.

Ser-25 serves as the catalytic Schiff-base intermediate with substrate; via pyruvic acid. Ser-25 carries the pyruvic acid (Ser) modification. Thr-57 contributes to the substrate binding site. Tyr-58 functions as the Proton donor in the catalytic mechanism. 73-75 (GGA) serves as a coordination point for substrate.

This sequence belongs to the PanD family. In terms of assembly, heterooctamer of four alpha and four beta subunits. Pyruvate is required as a cofactor. In terms of processing, is synthesized initially as an inactive proenzyme, which is activated by self-cleavage at a specific serine bond to produce a beta-subunit with a hydroxyl group at its C-terminus and an alpha-subunit with a pyruvoyl group at its N-terminus.

The protein localises to the cytoplasm. It carries out the reaction L-aspartate + H(+) = beta-alanine + CO2. Its pathway is cofactor biosynthesis; (R)-pantothenate biosynthesis; beta-alanine from L-aspartate: step 1/1. Its function is as follows. Catalyzes the pyruvoyl-dependent decarboxylation of aspartate to produce beta-alanine. The chain is Aspartate 1-decarboxylase from Xylella fastidiosa (strain 9a5c).